Consider the following 417-residue polypeptide: Serine hydroxymethyltransferase (417 aa).

(6S)-5,6,7,8-tetrahydrofolate-binding positions include Leu-112 and 116–118 (GHL). Position 221 is an N6-(pyridoxal phosphate)lysine (Lys-221). (6S)-5,6,7,8-tetrahydrofolate is bound at residue Glu-247.

Belongs to the SHMT family. In terms of assembly, homodimer. Pyridoxal 5'-phosphate is required as a cofactor.

It is found in the cytoplasm. The catalysed reaction is (6R)-5,10-methylene-5,6,7,8-tetrahydrofolate + glycine + H2O = (6S)-5,6,7,8-tetrahydrofolate + L-serine. The protein operates within one-carbon metabolism; tetrahydrofolate interconversion. Its pathway is amino-acid biosynthesis; glycine biosynthesis; glycine from L-serine: step 1/1. Catalyzes the reversible interconversion of serine and glycine with tetrahydrofolate (THF) serving as the one-carbon carrier. This reaction serves as the major source of one-carbon groups required for the biosynthesis of purines, thymidylate, methionine, and other important biomolecules. Also exhibits THF-independent aldolase activity toward beta-hydroxyamino acids, producing glycine and aldehydes, via a retro-aldol mechanism. This Borrelia garinii subsp. bavariensis (strain ATCC BAA-2496 / DSM 23469 / PBi) (Borreliella bavariensis) protein is Serine hydroxymethyltransferase.